We begin with the raw amino-acid sequence, 75 residues long: Molt-inhibiting hormone (75 aa).

Disulfide bonds link C7–C44, C24–C40, and C27–C53. At A75 the chain carries Alanine amide.

This sequence belongs to the arthropod CHH/MIH/GIH/VIH hormone family.

Its subcellular location is the secreted. In terms of biological role, inhibits Y-organs where molting hormone (ecdysteroid) is secreted. A molting cycle is initiated when MIH secretion diminishes or stops. The protein is Molt-inhibiting hormone of Procambarus clarkii (Red swamp crayfish).